A 451-amino-acid polypeptide reads, in one-letter code: Potassium/sodium uptake protein NtpJ (451 aa).

The next 11 helical transmembrane spans lie at 18–38 (IAAG…LPFF), 46–66 (HFID…LTTL), 78–98 (FLIM…PILF), 133–153 (ILKF…VVFI), 162–182 (IWFS…DLLG), 192–212 (VYLI…FIVW), 230–250 (VALS…LITE), 293–313 (LILT…AGGL), 350–370 (ALTL…VLSV), 380–400 (IEYI…TMGL), and 410–430 (LVII…VFSL).

The protein belongs to the TrkH potassium transport family.

It localises to the cell membrane. In terms of biological role, mediates electrogenic transport of potassium as well as sodium. Acts probably as a potassium-sodium cotransporter. Major sodium reentry pathway at high pH values. This Enterococcus hirae (strain ATCC 9790 / DSM 20160 / JCM 8729 / LMG 6399 / NBRC 3181 / NCIMB 6459 / NCDO 1258 / NCTC 12367 / WDCM 00089 / R) protein is Potassium/sodium uptake protein NtpJ (ntpJ).